The chain runs to 506 residues: Maturase K (506 aa).

It belongs to the intron maturase 2 family. MatK subfamily.

It localises to the plastid. It is found in the chloroplast. Functionally, usually encoded in the trnK tRNA gene intron. Probably assists in splicing its own and other chloroplast group II introns. This is Maturase K from Sullivantia sullivantii (Sullivant's coolwort).